The primary structure comprises 880 residues: Alanine--tRNA ligase (880 aa).

The segment at 414-443 (TVDESEFESEMEKQRNRARKARSGGDTEGW) is disordered. 4 residues coordinate Zn(2+): His566, His570, Cys668, and His672.

This sequence belongs to the class-II aminoacyl-tRNA synthetase family. Requires Zn(2+) as cofactor.

Its subcellular location is the cytoplasm. The enzyme catalyses tRNA(Ala) + L-alanine + ATP = L-alanyl-tRNA(Ala) + AMP + diphosphate. Catalyzes the attachment of alanine to tRNA(Ala) in a two-step reaction: alanine is first activated by ATP to form Ala-AMP and then transferred to the acceptor end of tRNA(Ala). Also edits incorrectly charged Ser-tRNA(Ala) and Gly-tRNA(Ala) via its editing domain. The polypeptide is Alanine--tRNA ligase (Alkaliphilus metalliredigens (strain QYMF)).